The following is a 448-amino-acid chain: tRNA(Ile)-lysidine synthase (448 aa).

25–30 (SGGSDS) provides a ligand contact to ATP.

This sequence belongs to the tRNA(Ile)-lysidine synthase family.

The protein localises to the cytoplasm. The enzyme catalyses cytidine(34) in tRNA(Ile2) + L-lysine + ATP = lysidine(34) in tRNA(Ile2) + AMP + diphosphate + H(+). Ligates lysine onto the cytidine present at position 34 of the AUA codon-specific tRNA(Ile) that contains the anticodon CAU, in an ATP-dependent manner. Cytidine is converted to lysidine, thus changing the amino acid specificity of the tRNA from methionine to isoleucine. In Brucella melitensis biotype 2 (strain ATCC 23457), this protein is tRNA(Ile)-lysidine synthase.